Consider the following 619-residue polypeptide: ATP-dependent RNA helicase abstrakt (619 aa).

Positions Met-1 to Ser-11 are enriched in basic residues. Disordered stretches follow at residues Met-1 to Val-25 and Glu-50 to Ala-69. Phosphoserine is present on residues Ser-11, Ser-13, Ser-14, Ser-56, Ser-57, Ser-58, and Ser-66. A Q motif motif is present at residues Arg-177–Val-205. Residues Leu-208–Ile-392 form the Helicase ATP-binding domain. Ala-221–Thr-228 lines the ATP pocket. The DEAD box motif lies at Asp-340–Asp-343. One can recognise a Helicase C-terminal domain in the interval Asn-403–Ala-563. Residues His-577–Lys-594 form a CCHC-type zinc finger.

It belongs to the DEAD box helicase family. DDX41 subfamily.

Its subcellular location is the nucleus. It catalyses the reaction ATP + H2O = ADP + phosphate + H(+). In terms of biological role, ATP-dependent RNA helicase. Is essential for the directed and fasciculated early outgrowth of the bolwig nerves, as well as for its navigation at later stages. Is required during post-transcriptional gene expression. Plays a role during morphogenetic process, apoptosis and the establishment of cell polarity. In Drosophila melanogaster (Fruit fly), this protein is ATP-dependent RNA helicase abstrakt (abs).